The primary structure comprises 317 residues: 3'-5' exoribonuclease YhaM (317 aa).

A DNA-binding region (OB) is located at residues 17-90; sequence FLLIKESTRG…QLKILSIRLS (74 aa). The HD domain occupies 163–279; that stretch reads HVVSMLAIGK…LHLIDLIDAK (117 aa).

It belongs to the YhaM family.

In terms of biological role, shows a 3'-5' exoribonuclease activity. The polypeptide is 3'-5' exoribonuclease YhaM (Oceanobacillus iheyensis (strain DSM 14371 / CIP 107618 / JCM 11309 / KCTC 3954 / HTE831)).